A 124-amino-acid polypeptide reads, in one-letter code: uncharacterized protein (124 aa).

Belongs to the asfivirus H124R family.

It is found in the virion. This is an uncharacterized protein from Ornithodoros (relapsing fever ticks).